The primary structure comprises 427 residues: Transcription termination factor Rho (427 aa).

A Rho RNA-BD domain is found at Leu-51–Asp-125. Residues Gly-168–Gly-173, Lys-180–Met-185, and Arg-211 each bind ATP.

It belongs to the Rho family. Homohexamer. The homohexamer assembles into an open ring structure.

Facilitates transcription termination by a mechanism that involves Rho binding to the nascent RNA, activation of Rho's RNA-dependent ATPase activity, and release of the mRNA from the DNA template. The polypeptide is Transcription termination factor Rho (Bacillus subtilis (strain 168)).